The primary structure comprises 114 residues: Iron-sulfur cluster insertion protein ErpA (114 aa).

Residues C42, C106, and C108 each coordinate iron-sulfur cluster.

The protein belongs to the HesB/IscA family. As to quaternary structure, homodimer. Iron-sulfur cluster serves as cofactor.

In terms of biological role, required for insertion of 4Fe-4S clusters for at least IspG. The polypeptide is Iron-sulfur cluster insertion protein ErpA (Klebsiella pneumoniae subsp. pneumoniae (strain ATCC 700721 / MGH 78578)).